Here is a 75-residue protein sequence, read N- to C-terminus: U6-lycotoxin-Ls1a (75 aa).

A signal peptide spans M1–A21. Positions E22–R25 are excised as a propeptide.

The protein belongs to the neurotoxin 19 (CSTX) family. 06 (U6-Lctx) subfamily. In terms of processing, contains 4 disulfide bonds. Expressed by the venom gland.

The protein localises to the secreted. The polypeptide is U6-lycotoxin-Ls1a (Lycosa singoriensis (Wolf spider)).